Here is a 718-residue protein sequence, read N- to C-terminus: Protein Hook homolog 1 (718 aa).

Residues 8–124 enclose the Calponin-homology (CH) domain; the sequence is PLLCDSLILW…RLMQLILGCA (117 aa). Coiled coils occupy residues 164–428 and 473–652; these read SASD…ELRY and LLLQ…AKLR.

This sequence belongs to the hook family. As to quaternary structure, interacts with microtubules.

The protein localises to the cytoplasm. It localises to the cytoskeleton. Its function is as follows. May function to promote vesicle trafficking and/or fusion. This Gallus gallus (Chicken) protein is Protein Hook homolog 1 (HOOK1).